The chain runs to 359 residues: Protein FLX-like 2 (359 aa).

Basic residues predominate over residues Met-1–Arg-16. The disordered stretch occupies residues Met-1–His-27. Residues His-83–Asn-236 adopt a coiled-coil conformation. Residues Thr-303–Arg-359 are disordered.

The protein belongs to the FLX family. Interacts with FRI.

In terms of biological role, has no transcriptional activation activity. This chain is Protein FLX-like 2 (FLXL2), found in Arabidopsis thaliana (Mouse-ear cress).